Reading from the N-terminus, the 304-residue chain is uncharacterized protein (304 aa).

A signal peptide spans 1–25; that stretch reads MVKTAMLGAVALVIALGGTCGVADA. The GP-PDE domain maps to 34-303; it reads PMIVAHRAGT…DSPLAAQQWR (270 aa).

This is an uncharacterized protein from Mycobacterium tuberculosis (strain CDC 1551 / Oshkosh).